A 327-amino-acid chain; its full sequence is MLTYPPVKKVSVVIPVYNEQDSLPELLRRTDTACATLGRQYEILLIDDGSSDDSARMLTEAAEAEGSHVVAVLLNRNYGQHSAIMAGFSHVTGDLIITLDADLQNPPEEIPRLVEKADEGYDVVGTVRQNRQDSIFRKSASKMINRLIQRTTGKAMGDYGCMLRAYRRHIIDAMLNCHERSTFIPILANTFARRAVEIPVMHAEREFGDSKYSFMRLINLMYDLVTCLTTTPLRLLSIFGSVIALLGFAFGLLLVVLRLAFGPQWAAEGVFMLFAVLFMFIGAQFIGMGLLGEYIGRIYNDVRARPRYFIQRVVRQPETASKEEDRS.

Transmembrane regions (helical) follow at residues 236–256 (LSIF…LLVV) and 270–290 (VFML…GMGL).

It belongs to the glycosyltransferase 2 family.

It localises to the cell inner membrane. The enzyme catalyses UDP-4-deoxy-4-formamido-beta-L-arabinose + di-trans,octa-cis-undecaprenyl phosphate = 4-deoxy-4-formamido-alpha-L-arabinopyranosyl di-trans,octa-cis-undecaprenyl phosphate + UDP. It participates in glycolipid biosynthesis; 4-amino-4-deoxy-alpha-L-arabinose undecaprenyl phosphate biosynthesis; 4-amino-4-deoxy-alpha-L-arabinose undecaprenyl phosphate from UDP-4-deoxy-4-formamido-beta-L-arabinose and undecaprenyl phosphate: step 1/2. The protein operates within bacterial outer membrane biogenesis; lipopolysaccharide biosynthesis. In terms of biological role, catalyzes the transfer of 4-deoxy-4-formamido-L-arabinose from UDP to undecaprenyl phosphate. The modified arabinose is attached to lipid A and is required for resistance to polymyxin and cationic antimicrobial peptides. In Klebsiella pneumoniae (strain 342), this protein is Undecaprenyl-phosphate 4-deoxy-4-formamido-L-arabinose transferase.